A 115-amino-acid polypeptide reads, in one-letter code: DNA-directed RNA polymerase subunit omega (115 aa).

This sequence belongs to the RNA polymerase subunit omega family. As to quaternary structure, the RNAP catalytic core consists of 2 alpha, 1 beta, 1 beta' and 1 omega subunit. When a sigma factor is associated with the core the holoenzyme is formed, which can initiate transcription.

It catalyses the reaction RNA(n) + a ribonucleoside 5'-triphosphate = RNA(n+1) + diphosphate. Functionally, promotes RNA polymerase assembly. Latches the N- and C-terminal regions of the beta' subunit thereby facilitating its interaction with the beta and alpha subunits. This is DNA-directed RNA polymerase subunit omega from Cutibacterium acnes (strain DSM 16379 / KPA171202) (Propionibacterium acnes).